Here is a 1150-residue protein sequence, read N- to C-terminus: Cell division cycle and apoptosis regulator protein 1 (1150 aa).

The segment at 1-249 (MAQFGGQKNP…TQPQPQSLLQ (249 aa)) is interaction with AR. 2 disordered regions span residues 124–146 (PTAQITVSYPTPRSSQQQTQPQK) and 285–354 (IVSQ…SPRR). Residues 134-146 (TPRSSQQQTQPQK) are compositionally biased toward low complexity. The interval 203–660 (QRIQTLPNQN…RALSSKGLKS (458 aa)) is interaction with GATA2. 2 stretches are compositionally biased toward basic and acidic residues: residues 293 to 334 (RRLD…ERSP) and 341 to 352 (ERSPRRERERSP). Position 456 is a phosphoserine (Ser-456). Positions 594 to 618 (KQQLVEKLQGERKEADGEQDEEEKD) form a coiled coil. The interval 600-638 (KLQGERKEADGEQDEEEKDDGEAKEISTPTHWSKLDPKT) is disordered. The segment covering 610 to 621 (GEQDEEEKDDGE) has biased composition (acidic residues). Thr-627 carries the post-translational modification Phosphothreonine. An SAP domain is found at 636 to 670 (PKTMKVNDLRKELESRALSSKGLKSQLIARLTKQL). Residue Lys-637 forms a Glycyl lysine isopeptide (Lys-Gly) (interchain with G-Cter in ubiquitin) linkage. Residues 643 to 1150 (DLRKELESRA…QKSKENGASV (508 aa)) are interaction with GATA1. Position 667 is a phosphothreonine (Thr-667). 4 stretches are compositionally biased toward basic and acidic residues: residues 673 to 687 (EEQKEEQKELEKSEK), 694 to 713 (DRKSEDDKEEEERKRQEEIE), 796 to 817 (KEDKKEKDKKSKKDERKDKKEE), and 832 to 855 (SGDDKDKKEDRDERKKEDKRKDDS). Disordered regions lie at residues 673–713 (EEQK…EEIE) and 796–915 (KEDK…EKEK). 2 positions are modified to phosphoserine: Ser-685 and Ser-697. Acidic residues predominate over residues 856 to 889 (KDDDETEEDNNQDEYDPMEAEEAEDEEDDRDEEE). Thr-861 is modified (phosphothreonine). Residues 890–915 (MTKRDDKRDINRYCKERPSKDKEKEK) are compositionally biased toward basic and acidic residues. Lys-1012 is covalently cross-linked (Glycyl lysine isopeptide (Lys-Gly) (interchain with G-Cter in SUMO1); alternate). Lys-1012 is covalently cross-linked (Glycyl lysine isopeptide (Lys-Gly) (interchain with G-Cter in SUMO2); alternate). Residues 1033–1114 (DVGSLLQKLE…LQFENQMNKT (82 aa)) adopt a coiled-coil conformation. Glycyl lysine isopeptide (Lys-Gly) (interchain with G-Cter in SUMO2) cross-links involve residues Lys-1067 and Lys-1135.

In terms of assembly, directly interacts with ESR1, NR3C1 and p53/TP53. Interacts (via N-terminus) with CALCOCO1. Interacts with MED1. Interacts with GATA1. Interacts with AR and GATA2. In terms of tissue distribution, expressed in various epithelial cancer cell lines, including breast, colon, prostate, pancreatic and leukemia. Expression is regulated by growth factors.

It is found in the cytoplasm. The protein resides in the perinuclear region. Its function is as follows. Associates with components of the Mediator and p160 coactivator complexes that play a role as intermediaries transducing regulatory signals from upstream transcriptional activator proteins to basal transcription machinery at the core promoter. Recruited to endogenous nuclear receptor target genes in response to the appropriate hormone. Also functions as a p53 coactivator. May thus play an important role in transcriptional regulation. May be involved in apoptosis signaling in the presence of the reinoid CD437. Apoptosis induction involves sequestration of 14-3-3 protein(s) and mediated altered expression of multiple cell cycle regulatory genes including MYC, CCNB1 and CDKN1A. Plays a role in cell cycle progression and/or cell proliferation. In association with CALCOCO1 enhances GATA1- and MED1-mediated transcriptional activation from the gamma-globin promoter during erythroid differentiation of K562 erythroleukemia cells. Can act as a both a coactivator and corepressor of AR-mediated transcription. Contributes to chromatin looping and AR transcription complex assembly by stabilizing AR-GATA2 association on chromatin and facilitating MED1 and RNA polymerase II recruitment to AR-binding sites. May play an important role in the growth and tumorigenesis of prostate cancer cells. This is Cell division cycle and apoptosis regulator protein 1 (CCAR1) from Homo sapiens (Human).